A 314-amino-acid chain; its full sequence is Dihydropteroate synthase (314 aa).

The Pterin-binding domain maps to 10–294; it reads TVICGIINVT…DVASHRMAVE (285 aa). Mg(2+) is bound at residue asparagine 17. (7,8-dihydropterin-6-yl)methyl diphosphate contacts are provided by residues threonine 57, aspartate 91, asparagine 110, aspartate 201, lysine 237, and 282 to 284; that span reads RVH.

Belongs to the DHPS family. As to quaternary structure, homodimer or homotrimer. Mg(2+) serves as cofactor.

The enzyme catalyses (7,8-dihydropterin-6-yl)methyl diphosphate + 4-aminobenzoate = 7,8-dihydropteroate + diphosphate. The protein operates within cofactor biosynthesis; tetrahydrofolate biosynthesis; 7,8-dihydrofolate from 2-amino-4-hydroxy-6-hydroxymethyl-7,8-dihydropteridine diphosphate and 4-aminobenzoate: step 1/2. Catalyzes the condensation of para-aminobenzoate (pABA) with 6-hydroxymethyl-7,8-dihydropterin diphosphate (DHPt-PP) to form 7,8-dihydropteroate (H2Pte), the immediate precursor of folate derivatives. The polypeptide is Dihydropteroate synthase (sulA) (Streptococcus pneumoniae serotype 4 (strain ATCC BAA-334 / TIGR4)).